The sequence spans 318 residues: MATENKILILGATGAIGRHIVWASIKAGNPTYALVRKTSDNVNKPKLTEAANPETKEELLKNYQASGVILLEGDINDHETLVNAIKQVDTVICAAGRLLIEDQVKVIKAIKEAGNVKRFFPSEFGLDVDRHDAVEPVRQVFEEKASIRRVVESEGVPYTYLCCHAFTGYFLRNLAQIDATDPPRDKVVILGDGNVRGAYVTEADVGTYTIRAANDPNTLNKAVHIRLPNNYLTANEVIALWEKKIGKTLEKTYVSEEQVLKDIQTSSFPHNYLLALYHSQQIKGDAVYEIDPAKDVEAYDAYPDVKYTTADEYLNQFV.

Residues 11–17 (GATGAIG), Arg-36, and Lys-44 each bind NADP(+). Residue Lys-144 is the Proton acceptor of the active site. Residue Arg-148 coordinates NADP(+).

It belongs to the NmrA-type oxidoreductase family. Isoflavone reductase subfamily.

The catalysed reaction is (3R)-vestitone + NADP(+) = 2'-hydroxyformononetin + NADPH + 2 H(+). The protein operates within phytoalexin biosynthesis; pterocarpan phytoalexin biosynthesis. Its function is as follows. Reduces achiral isoflavones to chiral isoflavanones during the biosynthesis of chiral pterocarpan phytoalexins. The reduction product (sophrol) is a third isomer, which represents the penultimate intermediate in the synthesis of the phytoalexin (+)-pisatin, the major phytoalexin in pea. In Pisum sativum (Garden pea), this protein is Isoflavone reductase (IFR).